We begin with the raw amino-acid sequence, 285 residues long: MAGAGSEARFAGLSLVQLNELLEDEGQLTEMVQKMEETQNVQLNKEMTLASNRSLAEGNLLYQPQLDTLKARLTQKYQELQVLFEAYQIKKTKLDRQSSSASLETLLALLQAEGAKIEEDTENMAEKFLDGELPLDSFIDVYQSKRKLAHMRRVKIEKLQEMVLKGQRLPQALAPLPPRLPELAPTAPLPYPAPEASGPPAVAPRRIPPPPPPVPAGRLATPFTAAMSSGQAVPYPGLQCPPLPPRVGLPTQQGFSSQFVSPYPPPLPQRPPPRLPPHQPGFILQ.

The tract at residues 50 to 170 (ASNRSLAEGN…EMVLKGQRLP (121 aa)) is interaction with IST1. Residues 84–173 (FEAYQIKKTK…LKGQRLPQAL (90 aa)) enclose the VPS37 C-terminal domain. The interval 175–201 (PLPPRLPELAPTAPLPYPAPEASGPPA) is disordered. Arginine 218 is modified (omega-N-methylarginine). The interval 230–285 (GQAVPYPGLQCPPLPPRVGLPTQQGFSSQFVSPYPPPLPQRPPPRLPPHQPGFILQ) is disordered. Polar residues predominate over residues 250–260 (PTQQGFSSQFV). Pro residues predominate over residues 262-279 (PYPPPLPQRPPPRLPPHQ).

This sequence belongs to the VPS37 family. Component of the ESCRT-I complex (endosomal sorting complex required for transport I) which consists of TSG101, VPS28, a VPS37 protein (VPS37A to -D) and MVB12A or MVB12B in a 1:1:1:1 stoichiometry. Interacts with TSG101, VPS28, MVB12A and MVB12B. Component of the ESCRT-I complex (endosomal sorting complex required for transport I) which consists of TSG101, VPS28, a VPS37 protein (VPS37A to -D) and UBAP1 in a 1:1:1:1 stoichiometry. Interacts with CEP55. Interacts with IST1. In terms of tissue distribution, widely expressed. Expressed in macrophages and lymphocytes.

The protein resides in the late endosome membrane. Component of the ESCRT-I complex, a regulator of vesicular trafficking process. Required for the sorting of endocytic ubiquitinated cargos into multivesicular bodies. May be involved in cell growth and differentiation. In Homo sapiens (Human), this protein is Vacuolar protein sorting-associated protein 37B (VPS37B).